The following is a 727-amino-acid chain: E3 SUMO-protein ligase pli1 (727 aa).

Residues 18–52 (ETGLIIPQLKDILRVFGLRLSGTKAELITRIKQLI) form the SAP domain. The PINIT domain occupies 108 to 261 (YSRPFAPVVH…SVVVCFVKVY (154 aa)). The SP-RING-type zinc-finger motif lies at 290–371 (QDADIIATST…MQHILESTPS (82 aa)). Residues cysteine 321, histidine 323, cysteine 344, and cysteine 347 each contribute to the Zn(2+) site. Phosphoserine is present on residues serine 395 and serine 396. 2 disordered regions span residues 408–558 (ELSD…TQHS) and 706–727 (QSNN…QSID). Polar residues-rich tracts occupy residues 417–435 (TMAN…THNS) and 459–494 (VATS…NRST). Positions 546–558 (SQQNNNNSNTQHS) are enriched in low complexity.

Belongs to the PIAS family. Interacts with hus5/ubc9.

Its subcellular location is the nucleus. Its pathway is protein modification; protein sumoylation. Its function is as follows. Acts as an E3 ligase mediating SUMO/Smt3 attachment to other proteins. Involved in the maintenance of the centromere and in telomere length. Regulates recombination, via extension sumoylation, particularly within the heterochromatin repeats. This Schizosaccharomyces pombe (strain 972 / ATCC 24843) (Fission yeast) protein is E3 SUMO-protein ligase pli1 (pli1).